We begin with the raw amino-acid sequence, 708 residues long: WD repeat-containing and planar cell polarity effector protein fritz homolog (708 aa).

WD repeat units lie at residues 303-342 (PLRS…TLLA) and 343-382 (QADL…IRAQ).

The protein belongs to the WD repeat fritz family. Interacts with sept2-a. Interacts with intu and fuz; fuz, intu and wdpcp probably form the core CPLANE (ciliogenesis and planar polarity effectors) complex.

The protein localises to the cell membrane. The protein resides in the cytoplasm. It localises to the cytoskeleton. Its subcellular location is the cilium axoneme. It is found in the cilium basal body. Functionally, probable effector of the planar cell polarity signaling pathway which regulates the septin cytoskeleton in both ciliogenesis and collective cell movements including covergent extension during gastrulation. Controls cell shape but not polarization during convergent extension. Proposed to function as core component of the CPLANE (ciliogenesis and planar polarity effectors) complex involved in the recruitment of peripheral IFT-A proteins to basal bodies. This Xenopus laevis (African clawed frog) protein is WD repeat-containing and planar cell polarity effector protein fritz homolog (wdpcp).